The primary structure comprises 740 residues: E3 ubiquitin-protein ligase TRIM9 (740 aa).

Residues 7–30 (CPTCKQLYANPVLLPCFHALCLGC) form an RING-type; degenerate zinc finger. Positions 64–73 (GNGGGAGGGA) are enriched in gly residues. A disordered region spans residues 64-114 (GNGGGAGGGAAAPVTNPNGPGTRHSSHSSAASTASSNTGSESVTSDQDQSD). Positions 74–105 (AAPVTNPNGPGTRHSSHSSAASTASSNTGSES) are enriched in low complexity. The B box-type 1; atypical zinc-finger motif lies at 195 to 244 (REALRCQMCETDPKVASLICEQCEIRYCDACRELTHPARGPLAKHTLVKP). Zn(2+) is bound by residues C200, C203, C225, H230, C255, H258, C277, and H283. A B box-type 2 zinc finger spans residues 250–291 (QRESVCGEHEETLSQYCLSCKAPACGLCIGELRHQAHDVQSI). Residues 294–324 (TCKAQKTELSHNLQQLSEKARSTTEFIQRLK) are a coiled coil. The region spanning 399–459 (LKETDSAAFL…ARAIDNLNFI (61 aa)) is the COS domain. One can recognise a Fibronectin type-III domain in the interval 474–567 (APMTPTILPS…ELIGLQTAEV (94 aa)). Positions 549–736 (NSAGEGEYSE…TMHTAMDAPK (188 aa)) constitute a B30.2/SPRY domain.

The protein belongs to the TRIM/RBCC family. As to quaternary structure, interacts (via fibronectin type-III domain) with pico. Interacts (via SPRY domain) with netrin receptor fra.

The protein localises to the cell projection. It localises to the axon. It is found in the perikaryon. It catalyses the reaction S-ubiquitinyl-[E2 ubiquitin-conjugating enzyme]-L-cysteine + [acceptor protein]-L-lysine = [E2 ubiquitin-conjugating enzyme]-L-cysteine + N(6)-ubiquitinyl-[acceptor protein]-L-lysine.. Its pathway is protein modification; protein ubiquitination. Its function is as follows. E3 ubiquitin-protein ligase activity. During embryonic and larval development, regulates the pattern of axonal projections of class IV nociceptive sensory neurons (C4da) downstream of netrin receptor fra. Regulates fine-scale topography of C4da axon terminals upon neuronal activity. During eye development, consolidates the attachment of R8 photoreceptor growth cones to the target medulla layer, probably downstream of fra. The chain is E3 ubiquitin-protein ligase TRIM9 from Drosophila melanogaster (Fruit fly).